The following is a 53-amino-acid chain: UPF0391 membrane protein PputGB1_0151 (53 aa).

2 consecutive transmembrane segments (helical) span residues 4–24 (WAIT…GGIA) and 29–49 (GIAK…FFFG).

It belongs to the UPF0391 family.

Its subcellular location is the cell membrane. The sequence is that of UPF0391 membrane protein PputGB1_0151 from Pseudomonas putida (strain GB-1).